Consider the following 316-residue polypeptide: Solute carrier family 25 member 32 (316 aa).

3 Solcar repeats span residues 20-109 (HVRY…IKSY), 118-209 (LEPL…LKLK), and 222-306 (LSTA…VSHF). 6 helical membrane-spanning segments follow: residues 26–46 (LVAGVSGGVLSNLALHPLDLV), 89–106 (VWGAGLSWGLYFFFYNAI), 123–143 (YLVSAAEAGAMTLCITNPLWV), 185–203 (GFVPGLFGTSHGALQFMAY), 227–243 (YISVAALSKIFAVAATY), and 281–300 (GIAPNLIRVTPACCITFVVY).

This sequence belongs to the mitochondrial carrier (TC 2.A.29) family.

Its subcellular location is the mitochondrion inner membrane. It catalyses the reaction FAD(in) = FAD(out). In terms of biological role, facilitates flavin adenine dinucleotide (FAD) translocation across the mitochondrial inner membrane into the mitochondrial matrix where it acts as a redox cofactor to assist flavoenzyme activities in fundamental metabolic processes including fatty acid beta-oxidation, amino acid and choline metabolism as well as mitochondrial electron transportation. In particular, provides FAD to DLD dehydrogenase of the glycine cleavage system, part of mitochondrial one-carbon metabolic pathway involved in neural tube closure in early embryogenesis. This chain is Solute carrier family 25 member 32, found in Mus musculus (Mouse).